The primary structure comprises 196 residues: Glycerol-3-phosphate acyltransferase (196 aa).

Transmembrane regions (helical) follow at residues 1 to 21 (MGFIIGFLLSVFGYLLGSILF), 53 to 73 (KYGALVFLLDAFKGFLIAILD), 76 to 96 (YIDPSSLWFGIVMVSPVIGHI), 115 to 135 (VVFGISPLLALKMFLVWAFVF), and 141 to 161 (VSLASITSVLVGYFLFLEGDF).

It belongs to the PlsY family. As to quaternary structure, probably interacts with PlsX.

It is found in the cell inner membrane. The enzyme catalyses an acyl phosphate + sn-glycerol 3-phosphate = a 1-acyl-sn-glycero-3-phosphate + phosphate. It participates in lipid metabolism; phospholipid metabolism. In terms of biological role, catalyzes the transfer of an acyl group from acyl-phosphate (acyl-PO(4)) to glycerol-3-phosphate (G3P) to form lysophosphatidic acid (LPA). This enzyme utilizes acyl-phosphate as fatty acyl donor, but not acyl-CoA or acyl-ACP. The sequence is that of Glycerol-3-phosphate acyltransferase from Hydrogenobaculum sp. (strain Y04AAS1).